The sequence spans 132 residues: Urease subunit beta (132 aa).

Belongs to the urease beta subunit family. Heterotrimer of UreA (gamma), UreB (beta) and UreC (alpha) subunits. Three heterotrimers associate to form the active enzyme.

Its subcellular location is the cytoplasm. It catalyses the reaction urea + 2 H2O + H(+) = hydrogencarbonate + 2 NH4(+). Its pathway is nitrogen metabolism; urea degradation; CO(2) and NH(3) from urea (urease route): step 1/1. This chain is Urease subunit beta, found in Natronomonas pharaonis (strain ATCC 35678 / DSM 2160 / CIP 103997 / JCM 8858 / NBRC 14720 / NCIMB 2260 / Gabara) (Halobacterium pharaonis).